The following is a 610-amino-acid chain: Dapper homolog 3 (610 aa).

S6 carries the phosphoserine modification. 3 disordered regions span residues 50 to 76 (PGMG…RRAA), 102 to 179 (LESG…SVGA), and 200 to 579 (TCSS…PAGP). A compositionally biased stretch (acidic residues) spans 56 to 69 (EAEDEEDAEEDEDA). A coiled-coil region spans residues 63 to 87 (AEEDEDAAAARRAAAALEEQLEALP). The segment covering 120-138 (DPSSTGGPDSPPSTFCGDS) has biased composition (low complexity). Phosphoserine is present on residues S165 and S237. Omega-N-methylarginine is present on R255. Over residues 317-331 (PPEPAPPAAASPPSS) the composition is skewed to pro residues. Residues 344–356 (PGAPAASRGLPGR) show a composition bias toward low complexity. A phosphoserine mark is found at S409 and S456. Residues 475-485 (PRGPAPSPSAP) show a composition bias toward pro residues. The span at 524–545 (ESESSASEGESPAFSSASSDSD) shows a compositional bias: low complexity. Gly residues predominate over residues 566–576 (GPGGAAGGGTP). A PDZ-binding motif is present at residues 607-610 (MTTV).

The protein belongs to the dapper family. In terms of assembly, can form homodimers and heterodimers with DACT1 or DACT3. Interacts with CSNK1D, PKA catalytic subunit, PKC-type kinase, DVL1, DVL2, DVL3, VANGL1, VANGL2 and CTNND1. In terms of tissue distribution, expressed in brain and uterus.

May be involved in regulation of intracellular signaling pathways during development. Specifically thought to play a role in canonical and/or non-canonical Wnt signaling pathways through interaction with DSH (Dishevelled) family proteins. The chain is Dapper homolog 3 (Dact3) from Mus musculus (Mouse).